The following is a 341-amino-acid chain: MPHSQKSRHCELEQGLQAPKEAQGLVGVQVAEAEKVNTTASSSPSTLIQGTLEKVSASGTPGTPQSSQRVCSPCTTIKATPWNQSDESSRSQEKKDPGASQALMLEKKVDELVKFLSVKYTTKQPITEAEMLKGVIKEHKDHFPPIFMQAHECMEIVFGTDMKEVDPISHSCVLLKSLDLTYDRRLSDDQGMPKTGLLILTFGVILMEANCASEEKIWEVLNIIRVYAGWKDFIYGEPRKLITRDLVQEKYLECCQVSNSDPPRYKFPWGPRAHAETTKMKVLEFFSRVSGSDASSFPLLYEEALRDEKEKAQAIIATMGGTTLMASAHSWAKSSSFSCPE.

Disordered regions lie at residues 1 to 21 (MPHS…APKE) and 78 to 101 (KATP…GASQ). Positions 87–97 (ESSRSQEKKDP) are enriched in basic and acidic residues. Residues 105-304 (LEKKVDELVK…SSFPLLYEEA (200 aa)) form the MAGE domain.

This Homo sapiens (Human) protein is Putative MAGE domain-containing protein MAGEA13P (MAGEA13P).